Reading from the N-terminus, the 300-residue chain is uncharacterized protein (300 aa).

This sequence belongs to the chlamydial CPn_0593/CT_474/TC_0759 family.

This is an uncharacterized protein from Chlamydia muridarum (strain MoPn / Nigg).